A 423-amino-acid polypeptide reads, in one-letter code: Mannan endo-1,4-beta-mannosidase (423 aa).

The first 27 residues, 1-27 (MKTITTARLPWAAQSFALGICLIALLG), serve as a signal peptide directing secretion. The GH26 domain occupies 56-409 (METRSLFAFM…YADEFTAFNR (354 aa)). 3 residues coordinate substrate: E121, H143, and W162. Catalysis depends on E212, which acts as the Proton donor. Substrate-binding residues include W217 and Y285. E320 functions as the Nucleophile in the catalytic mechanism. Residues 360 to 361 (WR) and H377 each bind substrate.

This sequence belongs to the glycosyl hydrolase 26 family. Homodimer.

The enzyme catalyses Random hydrolysis of (1-&gt;4)-beta-D-mannosidic linkages in mannans, galactomannans and glucomannans.. Its function is as follows. Catalyzes the endo hydrolysis of beta-1,4-linked mannan and galactomannan, but displays little activity towards other polysaccharides located in the plant cell wall. Preferentially hydrolyzes the larger oligosaccharides and has greater activity against non-substituted polysaccharides. It displays tight specificity for mannose at both the -2 and the -1 subsites. Appears to act in synergy with alpha-galactosidase (AgaA) to elicit hydrolysis of galactomannan. The polypeptide is Mannan endo-1,4-beta-mannosidase (Cellvibrio japonicus (strain Ueda107) (Pseudomonas fluorescens subsp. cellulosa)).